We begin with the raw amino-acid sequence, 280 residues long: Hydroxyethylthiazole kinase (280 aa).

M50 is a binding site for substrate. Positions 125 and 178 each coordinate ATP. Residue G205 participates in substrate binding.

Belongs to the Thz kinase family. Requires Mg(2+) as cofactor.

It catalyses the reaction 5-(2-hydroxyethyl)-4-methylthiazole + ATP = 4-methyl-5-(2-phosphooxyethyl)-thiazole + ADP + H(+). It functions in the pathway cofactor biosynthesis; thiamine diphosphate biosynthesis; 4-methyl-5-(2-phosphoethyl)-thiazole from 5-(2-hydroxyethyl)-4-methylthiazole: step 1/1. Catalyzes the phosphorylation of the hydroxyl group of 4-methyl-5-beta-hydroxyethylthiazole (THZ). In Lacticaseibacillus paracasei (strain ATCC 334 / BCRC 17002 / CCUG 31169 / CIP 107868 / KCTC 3260 / NRRL B-441) (Lactobacillus paracasei), this protein is Hydroxyethylthiazole kinase.